The primary structure comprises 273 residues: Octanoyltransferase (273 aa).

A BPL/LPL catalytic domain is found at 35–254 (DRVPDTCLLL…HLRDILENAE (220 aa)). Substrate-binding positions include 73-80 (RGGKITWH), 184-186 (AIG), and 197-199 (GFA). Cys-215 acts as the Acyl-thioester intermediate in catalysis.

It belongs to the LipB family.

It localises to the cytoplasm. The catalysed reaction is octanoyl-[ACP] + L-lysyl-[protein] = N(6)-octanoyl-L-lysyl-[protein] + holo-[ACP] + H(+). It participates in protein modification; protein lipoylation via endogenous pathway; protein N(6)-(lipoyl)lysine from octanoyl-[acyl-carrier-protein]: step 1/2. Its function is as follows. Catalyzes the transfer of endogenously produced octanoic acid from octanoyl-acyl-carrier-protein onto the lipoyl domains of lipoate-dependent enzymes. Lipoyl-ACP can also act as a substrate although octanoyl-ACP is likely to be the physiological substrate. This is Octanoyltransferase from Streptomyces griseus subsp. griseus (strain JCM 4626 / CBS 651.72 / NBRC 13350 / KCC S-0626 / ISP 5235).